Here is a 1367-residue protein sequence, read N- to C-terminus: Flocculation protein FLO11 (1367 aa).

A signal peptide spans 1-21 (MQRPFLLAYLVLSLLFNSALG). The 177-residue stretch at 31-207 (SSEGTSCNSI…NIDCDNNCGG (177 aa)) folds into the Flo11 domain. 3 disulfide bridges follow: cysteine 37–cysteine 201, cysteine 44–cysteine 179, and cysteine 141–cysteine 205. A compositionally biased stretch (low complexity) spans 209–267 (KSSTTTSSTSESSTTTSSTSESSTTTSSTSESSTTTSSTSESSTSSSTTAPATPTTTSC). 2 disordered regions span residues 209 to 975 (KSST…TTSV) and 1008 to 1032 (TTTV…PTTP). 45 repeat units span residues 210–219 (SSTTTSSTSE), 220–229 (SSTTTSSTSE), 230–239 (SSTTTSSTSE), 240–249 (SSTTTSSTSE), 262–274 (PTTT…KPTP), 275–287 (PTTT…KPTP), 313–327 (PVPT…SSSA), 328–342 (PVPT…SSSA), 343–354 (PVTSSTTESSSA), 355–369 (PVPT…SSSA), 370–381 (PVTSSTTESSSA), 382–393 (PVTSSTTESSSA), 394–408 (PVPT…SSSA), 409–420 (PVTSSTTESSSA), 421–432 (PVTSSTTESSSA), 433–444 (PVTSSTTESSSA), 445–456 (PVTSSTTESSSA), 457–471 (PVPT…SSSA), 472–483 (PVTSSTTESSSA), 484–498 (PVPT…SSSA), 499–510 (PVTSSTTESSSA), 511–525 (PVPT…SSSA), 526–540 (PAPT…SSSA), 541–552 (PVTSSTTESSSA), 568–579 (PVTSSTTESSSA), 580–594 (PVPT…SSSA), 595–609 (PVPT…SSSA), 610–624 (PAPT…SSSA), 625–636 (PVTSSTTESSSA), 637–651 (PVPT…SSSA), 652–666 (PVPT…SSSA), 667–681 (PVPT…SSSA), 682–693 (PVTSSTTESSSA), 694–705 (PVTSSTTESSSA), 706–720 (PVPT…SSSA), 721–735 (PVPT…SSSA), 736–750 (PVPT…SSSA), 751–762 (PVTSSTTESSSA), 763–777 (PVPT…SSSA), 778–792 (PVPT…SSSA), 808–822 (PVPT…TSSA), 838–852 (PVPT…SSSA), 865–879 (PVPT…TSSA), 937–968 (TTIT…TTVP), and 981–1012 (TTIT…TTVP). Positions 210-249 (SSTTTSSTSESSTTTSSTSESSTTTSSTSESSTTTSSTSE) are 4 X 10 AA repeats, Ser/Thr-rich. Residues 262–287 (PTTTSCTKEKPTPPTTTSCTKEKPTP) are 2 X 13 AA repeats, Thr-rich. Residues 281 to 292 (TKEKPTPPHHDT) are compositionally biased toward basic and acidic residues. Composition is skewed to low complexity over residues 302 to 900 (TSKT…TVTP) and 910 to 948 (TETS…STGT). Residues 313-852 (PVPTPSSSTT…SSSTTESSSA (540 aa)) form a 22 X 15 AA approximate repeats, Ser-rich region. Residues 343–762 (PVTSSTTESS…TSSTTESSSA (420 aa)) are 15 X 12 AA repeats, Ser/Thr-rich. N-linked (GlcNAc...) asparagine glycosylation occurs at asparagine 817. N-linked (GlcNAc...) asparagine glycosylation is present at asparagine 874. Residues 937–1119 (TTITTTVCST…SPKTVTTTVP (183 aa)) are 3 X 32 AA tandem repeats, Thr-rich. The span at 949–961 (NSAGETTSGCSPK) shows a compositional bias: polar residues. Residues 962 to 975 (TVTTTVPTTTTTSV) show a composition bias toward low complexity. The segment covering 1014 to 1032 (STSPSETASESTTTSPTTP) has biased composition (low complexity). The stretch at 1088–1119 (TTITTTVCSTGTNSAGETTSGCSPKTVTTTVP) is one 5-3 repeat. Residue glycine 1346 is the site of GPI-anchor amidated glycine attachment. The propeptide at 1347-1367 (AANIKVLGNFMWLLLALPVVF) is removed in mature form.

This sequence belongs to the flocculin family. Highly divergent. Post-translationally, extensively O-mannosylated. The GPI-anchor is attached to the protein in the endoplasmic reticulum and serves to target the protein to the cell surface. There, the glucosamine-inositol phospholipid moiety is cleaved off and the GPI-modified mannoprotein is covalently attached via its lipidless GPI glycan remnant to the 1,6-beta-glucan of the outer cell wall layer. In terms of processing, a soluble form is probably produced by proteolytic cleavage at the cell surface (shedding).

The protein localises to the secreted. It localises to the cell wall. The protein resides in the membrane. In terms of biological role, homophilic binding protein that enables kin discrimination in heterogeneous yeast populations by mediating homotypic cell-cell interactions during flocculation, a reversible and asexual process in which cells adhere to form aggregates (flocs). Plays a role in cell-substrate adhesion, haploid invasive growth, diploid pseudohyphae formation and biofilm (flor) development. Adhesive activity is inhibited by mannose, but not by glucose, maltose, sucrose or galactose. This Saccharomyces cerevisiae (strain ATCC 204508 / S288c) (Baker's yeast) protein is Flocculation protein FLO11.